Here is a 144-residue protein sequence, read N- to C-terminus: Small ribosomal subunit protein uS19 (144 aa).

Belongs to the universal ribosomal protein uS19 family.

Its function is as follows. Protein S19 forms a complex with S13 that binds strongly to the 16S ribosomal RNA. The protein is Small ribosomal subunit protein uS19 (rps19) of Aeropyrum pernix (strain ATCC 700893 / DSM 11879 / JCM 9820 / NBRC 100138 / K1).